Reading from the N-terminus, the 357-residue chain is Protein-arginine kinase (357 aa).

In terms of domain architecture, Phosphagen kinase C-terminal spans 24-255; it reads IVISTRLRIA…RQIIEQERVA (232 aa). ATP-binding positions include 27-31, histidine 92, arginine 126, 177-181, and 208-213; these read STRLR, RASVM, and RGIYGE. Positions 338–343 match the RDXXRA motif of the pArg binding pocket involved in allosteric regulation motif; it reads RDERRA.

It belongs to the ATP:guanido phosphotransferase family.

The catalysed reaction is L-arginyl-[protein] + ATP = N(omega)-phospho-L-arginyl-[protein] + ADP + H(+). Appears to be allosterically activated by the binding of pArg-containing polypeptides to the pArg-binding pocket localized in the C-terminal domain of McsB. Catalyzes the specific phosphorylation of arginine residues in proteins. This Brevibacillus brevis (strain 47 / JCM 6285 / NBRC 100599) protein is Protein-arginine kinase.